Consider the following 265-residue polypeptide: Apolipoprotein A-I (265 aa).

The N-terminal stretch at 1–18 (MKAVVLTLAVLFLTGSQA) is a signal peptide. Repeat copies occupy residues 67-88 (LKLL…EQLG) and 89-110 (PVTR…QEMN). Positions 67–265 (LKLLDNWDSL…DEASKKLNAQ (199 aa)) are 10 X approximate tandem repeats. Position 109 is a methionine sulfoxide (M109). Residues 111–121 (KDLQEVKQKVQ) form a 3; half-length repeat. Repeat copies occupy residues 122–142 (PYLD…RQKV), 144–165 (PLGE…DKLT), 166–187 (PLAE…QQLA), 188–209 (PYSD…EGGG), and 210–230 (SLVQ…EKAK). Residues 231-241 (PALEDLRQGLL) form a 9; half-length repeat. Repeat 10 spans residues 242–265 (PVLENLKVSILAAIDEASKKLNAQ).

Belongs to the apolipoprotein A1/A4/E family. As to quaternary structure, homodimer. Interacts with APOA1BP and CLU. Component of a sperm activating protein complex (SPAP), consisting of APOA1, an immunoglobulin heavy chain, an immunoglobulin light chain and albumin. Interacts with NDRG1. Interacts with SCGB3A2. Interacts with NAXE and YJEFN3. Post-translationally, glycosylated. Palmitoylated. In terms of processing, phosphorylation sites are present in the extracellular medium. In terms of tissue distribution, major protein of plasma HDL, also found in chylomicrons.

It localises to the secreted. Participates in the reverse transport of cholesterol from tissues to the liver for excretion by promoting cholesterol efflux from tissues and by acting as a cofactor for the lecithin cholesterol acyltransferase (LCAT). As part of the SPAP complex, activates spermatozoa motility. In Balaenoptera acutorostrata scammoni (North Pacific minke whale), this protein is Apolipoprotein A-I (APOA1).